Here is a 424-residue protein sequence, read N- to C-terminus: MIKMPRGTQDILPQDSAKWRYIENRLHTLMELYNYKEIRTPIFESTELFARGVGDSTDVVQKEMYTFKDKGDRSLTLRPEGTAAVVRSYIEHKMQGEPNQPIKLYYNGPMFRYERKQKGRYRQFNQFGVEAIGAENPSIDAEILAMVMHIYESFGLKHLKLVINSIGDSESRKEYNEALVKHFEPVIDTFCSDCQSRLHTNPMRILDCKIDRDKEAVKNAPRITDYLNNDSKSYYEQVKLHLDNLNISYVEDPNLVRGLDYYTHTAFELMIDNPEYDGAITTLCGGGRYNGLLQLLDGPDETGIGFALSIERLLMALDEEGISLDVSEDFDLFVVTMGEDADRYAVKLINDLRRNGIKVDKDYLNRKIKGQMKQADRLNAKYTVVIGDQELENNEIGVKNMISGESENVQLDELVNYFKSRKEV.

This sequence belongs to the class-II aminoacyl-tRNA synthetase family. Homodimer.

It is found in the cytoplasm. It catalyses the reaction tRNA(His) + L-histidine + ATP = L-histidyl-tRNA(His) + AMP + diphosphate + H(+). The protein is Histidine--tRNA ligase of Staphylococcus epidermidis (strain ATCC 12228 / FDA PCI 1200).